Here is a 571-residue protein sequence, read N- to C-terminus: ATP-dependent RNA helicase RhlB (571 aa).

A Q motif motif is present at residues 9 to 37 (VTFSSFDLHPALIAGLESAGFTRCTPIQA). The Helicase ATP-binding domain maps to 40–220 (LPVALPGGDV…YEHMNEPEKL (181 aa)). 53 to 60 (AQTGTGKT) contributes to the ATP binding site. Positions 166–169 (DEAD) match the DEAD box motif. Residues 231–393 (RVRQRIYFPS…PVTSELLTPL (163 aa)) form the Helicase C-terminal domain. The segment at 391-558 (TPLPRAPRVP…KPSGSPSLLS (168 aa)) is disordered. A compositionally biased stretch (acidic residues) spans 402–411 (EGEEADDDAG). Positions 419–432 (REAREQRAAEEQRR) are enriched in basic and acidic residues. Residues 435–448 (GRGGPGGSRSGSGG) show a composition bias toward gly residues. Residues 449–460 (GRRDGAGADGKP) are compositionally biased toward basic and acidic residues. Residues 483–497 (VVAAVAAQAPSAGVA) show a composition bias toward low complexity. The segment covering 503–512 (PRKRRRRRNG) has biased composition (basic residues). A compositionally biased stretch (low complexity) spans 539–558 (VVAKPVRAAAKPSGSPSLLS).

This sequence belongs to the DEAD box helicase family. RhlB subfamily. In terms of assembly, component of the RNA degradosome, which is a multiprotein complex involved in RNA processing and mRNA degradation.

The protein resides in the cytoplasm. The enzyme catalyses ATP + H2O = ADP + phosphate + H(+). DEAD-box RNA helicase involved in RNA degradation. Has RNA-dependent ATPase activity and unwinds double-stranded RNA. The polypeptide is ATP-dependent RNA helicase RhlB (Xanthomonas axonopodis pv. citri (strain 306)).